Here is a 98-residue protein sequence, read N- to C-terminus: NADH-ubiquinone oxidoreductase chain 4L (98 aa).

Helical transmembrane passes span 1–21 (MALT…GLLM), 29–49 (SLLC…LTIL), and 61–81 (IILL…LVMV).

The protein belongs to the complex I subunit 4L family. In terms of assembly, core subunit of respiratory chain NADH dehydrogenase (Complex I) which is composed of 45 different subunits.

Its subcellular location is the mitochondrion inner membrane. The enzyme catalyses a ubiquinone + NADH + 5 H(+)(in) = a ubiquinol + NAD(+) + 4 H(+)(out). Core subunit of the mitochondrial membrane respiratory chain NADH dehydrogenase (Complex I) which catalyzes electron transfer from NADH through the respiratory chain, using ubiquinone as an electron acceptor. Part of the enzyme membrane arm which is embedded in the lipid bilayer and involved in proton translocation. The polypeptide is NADH-ubiquinone oxidoreductase chain 4L (MT-ND4L) (Pteropus dasymallus (Ryukyu flying fox)).